A 460-amino-acid polypeptide reads, in one-letter code: Anthocyanidin 3-O-glucoside 5-O-glucosyltransferase 1 (460 aa).

Positions 1 to 22 (MVRRRVLLATFPAQGHINPALQ) are cleaved as a signal peptide. The active-site Proton acceptor is the His-16. An anthocyanidin is bound at residue His-16. UDP-alpha-D-glucose contacts are provided by Gln-338, His-353, Trp-356, Asn-357, Ser-358, Glu-361, Asp-377, and Gln-378.

The protein belongs to the UDP-glycosyltransferase family.

The catalysed reaction is an anthocyanidin 3-O-beta-D-glucoside + UDP-alpha-D-glucose = an anthocyanidin 3,5-di-O-beta-D-glucoside + UDP + 2 H(+). Its pathway is pigment biosynthesis; anthocyanin biosynthesis. In terms of biological role, catalyzes the glucosylation at the O-5 position of anthocyanidin 3-glucosides to form anthocyanidin 3,5-di-O-glucosides using UDP-glucose as sugar donor. Anthocyanidin 3,5-di-O-glucosides are molecules that are responsible for pigmentation. Also acts on anthocyanidin 3-O-(6-O-malonylglucoside). Much less active with hydroxycinnamoylglucose derivatives. No activity in the absence of the 3-O-glucoside group. This Perilla frutescens (Beefsteak mint) protein is Anthocyanidin 3-O-glucoside 5-O-glucosyltransferase 1 (PF3R4).